The chain runs to 311 residues: Methionyl-tRNA formyltransferase (311 aa).

(6S)-5,6,7,8-tetrahydrofolate is bound at residue Ser110–Pro113.

It belongs to the Fmt family.

It carries out the reaction L-methionyl-tRNA(fMet) + (6R)-10-formyltetrahydrofolate = N-formyl-L-methionyl-tRNA(fMet) + (6S)-5,6,7,8-tetrahydrofolate + H(+). Its function is as follows. Attaches a formyl group to the free amino group of methionyl-tRNA(fMet). The formyl group appears to play a dual role in the initiator identity of N-formylmethionyl-tRNA by promoting its recognition by IF2 and preventing the misappropriation of this tRNA by the elongation apparatus. The sequence is that of Methionyl-tRNA formyltransferase from Streptococcus pneumoniae serotype 2 (strain D39 / NCTC 7466).